The chain runs to 230 residues: Secretory carrier-associated membrane protein 4 (230 aa).

At 1–39 (MAGKENNFPPLPPFLPLKPCFYQDFSDEIPVEHQVLVKR) the chain is on the cytoplasmic side. The next 4 helical transmembrane spans lie at 40–60 (IYRL…ACLA), 61–81 (WWIA…LVLF), 106–126 (MTFF…AIGF), and 149–169 (VVML…AVTI). Residues 170–230 (VKVHRIYRGA…SYSSSGGHWP (61 aa)) are Cytoplasmic-facing. Residue threonine 194 is modified to Phosphothreonine.

The protein belongs to the SCAMP family.

It is found in the membrane. Functionally, probably involved in membrane protein trafficking. This is Secretory carrier-associated membrane protein 4 (Scamp4) from Mus musculus (Mouse).